A 220-amino-acid polypeptide reads, in one-letter code: Nucleolar protein 3 (220 aa).

The N-myristoyl glycine moiety is linked to residue glycine 2. Positions 4-95 (VQERPSETID…MPDPAWDWQH (92 aa)) constitute a CARD domain. The segment at 20–70 (VETLQADSGLLLDALVARGVLTGPEYEALDALPDAERRVRRLLLLVQSKGE) is essential for interaction with BAX. A disordered region spans residues 111 to 220 (GHWTPEAPSS…FQEEDESEDS (110 aa)). Residue threonine 149 is modified to Phosphothreonine; by CK2. Residues 152 to 220 (EPELEAEATE…FQEEDESEDS (69 aa)) are compositionally biased toward acidic residues.

In terms of assembly, oligomerizes (via CARD doamin). Interacts (via CARD domain) with CASP2; inhibits CASP2 activity in a phosphorylation-dependent manner. Interacts with CASP8; decreases CASP8 activity in a mitochondria localization- and phosphorylation-dependent manner and this interaction is dissociated by calcium. Interacts with TFPT; translocates NOL3 into the nucleus and negatively regulated TFPT-induced cell death. Interacts directly (via CARD domain) with FAS and FADD (via DED domain); inhibits death-inducing signaling complex (DISC) assembly by inhibiting the increase in FAS-FADD binding induced by FAS activation. Interacts (via CARD domain) with BAX (via a C-terminal 33 residues); inhibits BAX activation and translocation and consequently cytochrome c release from mitochondria. Interacts with PPM1G; may dephosphorylate NOL3. Interacts (via CARD domain) with BBC3 (via BH3 domain); preventing the association of BBC3 with BCL2 and resulting in activation of CASP8. Interacts (via CARD domain) with BAD(via BH3 domain); preventing the association of BAD with BCL2. Interacts directly (via CARD domain) with TNFRSF1A; inhibits TNF-signaling pathway. In terms of processing, phosphorylation at Thr-149 is required for its antiapoptotic effect by blocking death-inducing signaling complex death-inducing signaling complex (DISC) activity through the control of interaction with CASP8. Phosphorylation at Thr-149 results in translocation to mitochondria and this translocation enables the binding to CASP8. Dephosphorylated at Thr-149 by calcineurin; doesn't inhibit the association between FADD and CASP8 and the consequent apoptosis. Post-translationally, polyubiquitinated by MDM2; promoting proteasomal-dependent degradation in response to apoptotic stimuli.

It localises to the cytoplasm. The protein resides in the mitochondrion. The protein localises to the sarcoplasmic reticulum. Its subcellular location is the membrane. Functionally, apoptosis repressor that blocks multiple modes of cell death. Inhibits extrinsic apoptotic pathways through two different ways. Firstly by interacting with FAS and FADD upon FAS activation blocking death-inducing signaling complex (DISC) assembly. Secondly by interacting with CASP8 in a mitochondria localization- and phosphorylation-dependent manner, limiting the amount of soluble CASP8 available for DISC-mediated activation. Inhibits intrinsic apoptotic pathway in response to a wide range of stresses, through its interaction with BAX resulting in BAX inactivation, preventing mitochondrial dysfunction and release of pro-apoptotic factors. Inhibits calcium-mediated cell death by functioning as a cytosolic calcium buffer, dissociating its interaction with CASP8 and maintaining calcium homeostasis. Negatively regulates oxidative stress-induced apoptosis by phosphorylation-dependent suppression of the mitochondria-mediated intrinsic pathway, by blocking CASP2 activation and BAX translocation. Negatively regulates hypoxia-induced apoptosis in part by inhibiting the release of cytochrome c from mitochondria in a caspase-independent manner. Also inhibits TNF-induced necrosis by preventing TNF-signaling pathway through TNFRSF1A interaction abrogating the recruitment of RIPK1 to complex I. Finally through its role as apoptosis repressor, promotes vascular remodeling through inhibition of apoptosis and stimulation of proliferation, in response to hypoxia. Inhibits too myoblast differentiation through caspase inhibition. The sequence is that of Nucleolar protein 3 (Nol3) from Mus musculus (Mouse).